Consider the following 54-residue polypeptide: MARSETRPVVTLRSTAGTGRSYVTRKNRRNDPDRLELRKFDPAVGRHVLFREVR.

Belongs to the bacterial ribosomal protein bL33 family.

The sequence is that of Large ribosomal subunit protein bL33C from Streptomyces griseus subsp. griseus (strain JCM 4626 / CBS 651.72 / NBRC 13350 / KCC S-0626 / ISP 5235).